Here is a 377-residue protein sequence, read N- to C-terminus: Flagellar P-ring protein (377 aa).

The first 30 residues, 1–30 (MLARFLSSLLKASVTALAVVVAFGFAANFA), serve as a signal peptide directing secretion.

This sequence belongs to the FlgI family. As to quaternary structure, the basal body constitutes a major portion of the flagellar organelle and consists of four rings (L,P,S, and M) mounted on a central rod.

It is found in the periplasm. The protein localises to the bacterial flagellum basal body. Its function is as follows. Assembles around the rod to form the L-ring and probably protects the motor/basal body from shearing forces during rotation. This Cupriavidus pinatubonensis (strain JMP 134 / LMG 1197) (Cupriavidus necator (strain JMP 134)) protein is Flagellar P-ring protein.